Reading from the N-terminus, the 625-residue chain is tRNA uridine 5-carboxymethylaminomethyl modification enzyme MnmG (625 aa).

FAD-binding positions include 9–14 (GGGHAG), Val121, and Ser176. 270 to 284 (GPRYCPSIEDKIYRF) contacts NAD(+). Residue Gln367 participates in FAD binding.

Belongs to the MnmG family. Homodimer. Heterotetramer of two MnmE and two MnmG subunits. The cofactor is FAD.

Its subcellular location is the cytoplasm. In terms of biological role, NAD-binding protein involved in the addition of a carboxymethylaminomethyl (cmnm) group at the wobble position (U34) of certain tRNAs, forming tRNA-cmnm(5)s(2)U34. This chain is tRNA uridine 5-carboxymethylaminomethyl modification enzyme MnmG, found in Nitratiruptor sp. (strain SB155-2).